We begin with the raw amino-acid sequence, 180 residues long: ATP synthase subunit delta (180 aa).

The protein belongs to the ATPase delta chain family. F-type ATPases have 2 components, F(1) - the catalytic core - and F(0) - the membrane proton channel. F(1) has five subunits: alpha(3), beta(3), gamma(1), delta(1), epsilon(1). F(0) has three main subunits: a(1), b(2) and c(10-14). The alpha and beta chains form an alternating ring which encloses part of the gamma chain. F(1) is attached to F(0) by a central stalk formed by the gamma and epsilon chains, while a peripheral stalk is formed by the delta and b chains.

The protein resides in the cell membrane. Its function is as follows. F(1)F(0) ATP synthase produces ATP from ADP in the presence of a proton or sodium gradient. F-type ATPases consist of two structural domains, F(1) containing the extramembraneous catalytic core and F(0) containing the membrane proton channel, linked together by a central stalk and a peripheral stalk. During catalysis, ATP synthesis in the catalytic domain of F(1) is coupled via a rotary mechanism of the central stalk subunits to proton translocation. In terms of biological role, this protein is part of the stalk that links CF(0) to CF(1). It either transmits conformational changes from CF(0) to CF(1) or is implicated in proton conduction. The chain is ATP synthase subunit delta from Leuconostoc citreum (strain KM20).